The following is a 486-amino-acid chain: MNSTKPRVRFAPSPTGELHIGNARTAFFNWLYARHYGGKLILRIEDTDRQRSTRAFEARLIDDLKWLSLDWDEGPDGKGEVGPYRQSERLDLYESFLKNLQKDGRVYPCYCTEDELELERTSLLSRKMAPRYMGKCRNLTEADRRRLEAQGRRPTWRFRVSQGPVLFQDLIRGTMKFQGEAVGDFIIVRSNGTPAYNFAVVIDDHFMEISTVIRGEDHLSNTAIQLMLYEALGFEPPEFAHHSLILGKDRTKLSKRHGSVSVREFREKGILPEALLNYLALLGSSIGEGREVCSLEEIITAFSLDRAGKSGAVFDEDKLLWMNSLYIHEEPAIKLIERLRPFIEKAGYDVNKWETPWLDRMVEAVKPNLTTLADIGSYVKMIVEEPVRIDEDAAAVLRETETQMVLRTLLQLIEEGKFSHEDFYSQVMTALRKVTGARGKRLFMPVRAALTGTTRGPELDKIFVLLGEQSVKERLKKALNMQGNFS.

The 'HIGH' region signature appears at 12–22; that stretch reads PSPTGELHIGN. The 'KMSKS' region motif lies at 252-256; the sequence is KLSKR. Lysine 255 lines the ATP pocket.

The protein belongs to the class-I aminoacyl-tRNA synthetase family. Glutamate--tRNA ligase type 1 subfamily. Monomer.

Its subcellular location is the cytoplasm. It catalyses the reaction tRNA(Glu) + L-glutamate + ATP = L-glutamyl-tRNA(Glu) + AMP + diphosphate. Functionally, catalyzes the attachment of glutamate to tRNA(Glu) in a two-step reaction: glutamate is first activated by ATP to form Glu-AMP and then transferred to the acceptor end of tRNA(Glu). The chain is Glutamate--tRNA ligase 2 from Syntrophus aciditrophicus (strain SB).